Reading from the N-terminus, the 1887-residue chain is ATP-dependent DNA helicase tlh1 (1887 aa).

Over residues 329–347 (NQQRREQQDKGENKKRQDD) the composition is skewed to basic and acidic residues. Disordered regions lie at residues 329–372 (NQQR…EEEE), 504–552 (ERKE…NTDD), and 1110–1135 (MVEG…EMTQ). Acidic residues-rich tracts occupy residues 360–372 (LEDD…EEEE) and 524–533 (SAEDDNDNDN). Positions 540 to 549 (NNNNNNNNTN) are enriched in low complexity. Residues 1112–1131 (EGDKEKDKTNEEKNKDEVKA) are compositionally biased toward basic and acidic residues. The Helicase ATP-binding domain maps to 1200–1375 (YFSLLNRMNL…RQTFCTNFYV (176 aa)). ATP is bound by residues 1213–1220 (LPTGGGKS) and 1240–1247 (MNMVTLVL). The DEAH box motif lies at 1322–1325 (DEAH). The Helicase C-terminal domain occupies 1401–1559 (DLRTLMKRTK…CVRSFLASEM (159 aa)). Residues 1613-1643 (YNASFSSSPPPQPGNSSGMSAMNTNTTSTTP) form a disordered region. The segment covering 1626 to 1642 (GNSSGMSAMNTNTTSTT) has biased composition (low complexity). The CCHC-type zinc finger occupies 1804 to 1821 (STCYKCGKADHNLRECKL).

The protein belongs to the helicase family. RecQ subfamily.

It carries out the reaction Couples ATP hydrolysis with the unwinding of duplex DNA by translocating in the 3'-5' direction.. The catalysed reaction is ATP + H2O = ADP + phosphate + H(+). Functionally, a probable ATP-dependent 3'-5' DNA helicase. Has a role in telomerase-independent telomere maintenance. The sequence is that of ATP-dependent DNA helicase tlh1 from Schizosaccharomyces pombe (strain 972 / ATCC 24843) (Fission yeast).